A 94-amino-acid chain; its full sequence is Co-chaperonin GroES (94 aa).

The protein belongs to the GroES chaperonin family. As to quaternary structure, heptamer of 7 subunits arranged in a ring. Interacts with the chaperonin GroEL.

It is found in the cytoplasm. Its function is as follows. Together with the chaperonin GroEL, plays an essential role in assisting protein folding. The GroEL-GroES system forms a nano-cage that allows encapsulation of the non-native substrate proteins and provides a physical environment optimized to promote and accelerate protein folding. GroES binds to the apical surface of the GroEL ring, thereby capping the opening of the GroEL channel. This chain is Co-chaperonin GroES, found in Clostridium perfringens (strain ATCC 13124 / DSM 756 / JCM 1290 / NCIMB 6125 / NCTC 8237 / Type A).